We begin with the raw amino-acid sequence, 231 residues long: Probable transglycosylase SceD (231 aa).

The signal sequence occupies residues 1-27 (MKKTLLASSLAVGLGIVAGNAGHEAHA). The tract at residues 93 to 153 (SAQAPATNNV…ESKASEGSSV (61 aa)) is disordered. Polar residues predominate over residues 96–116 (APATNNVAPSADQANQVQSQE). The span at 119–137 (APQNAQTQQPQASTSNNSQ) shows a compositional bias: low complexity. The segment covering 138–153 (VTATPTESKASEGSSV) has biased composition (polar residues).

This sequence belongs to the transglycosylase family. SceD subfamily.

It localises to the secreted. In terms of biological role, is able to cleave peptidoglycan and affects clumping and separation of bacterial cells. This Staphylococcus aureus (strain bovine RF122 / ET3-1) protein is Probable transglycosylase SceD (sceD).